The chain runs to 734 residues: Polyribonucleotide nucleotidyltransferase (734 aa).

The Mg(2+) site is built by Asp505 and Asp511. Positions 572 to 631 (PKLTTIQIPVDAIGMVIGKGGETIRSITEETGAEINIEDDGTVTIASASGEGASAALETI) constitute a KH domain. Positions 641–715 (GTVYSGKVRD…GKTRFALSIK (75 aa)) constitute an S1 motif domain.

The protein belongs to the polyribonucleotide nucleotidyltransferase family. The cofactor is Mg(2+).

It is found in the cytoplasm. The catalysed reaction is RNA(n+1) + phosphate = RNA(n) + a ribonucleoside 5'-diphosphate. Involved in mRNA degradation. Catalyzes the phosphorolysis of single-stranded polyribonucleotides processively in the 3'- to 5'-direction. The protein is Polyribonucleotide nucleotidyltransferase of Prosthecochloris aestuarii (strain DSM 271 / SK 413).